We begin with the raw amino-acid sequence, 143 residues long: MKTYHQKPSEVQRDWYVIDASGKVLGRLATQISTLLRGKHKPTFTPSIDGGDFVIVVNAEKIVLTGRKPEQKIYYRHSGYPGGLKEIPYKMMLAKHPERILRLAVKRMLPKNRMGRRLLSKLRIYAGPNHPHAAQQPKPYIPR.

Belongs to the universal ribosomal protein uL13 family. In terms of assembly, part of the 50S ribosomal subunit.

In terms of biological role, this protein is one of the early assembly proteins of the 50S ribosomal subunit, although it is not seen to bind rRNA by itself. It is important during the early stages of 50S assembly. In Chloroflexus aggregans (strain MD-66 / DSM 9485), this protein is Large ribosomal subunit protein uL13.